A 283-amino-acid chain; its full sequence is D-alanine aminotransferase (283 aa).

Tyr-32 provides a ligand contact to substrate. Position 51 (Arg-51) interacts with pyridoxal 5'-phosphate. Substrate contacts are provided by Arg-99 and His-101. Lys-146 acts as the Proton acceptor in catalysis. At Lys-146 the chain carries N6-(pyridoxal phosphate)lysine. Glu-178 contacts pyridoxal 5'-phosphate.

Belongs to the class-IV pyridoxal-phosphate-dependent aminotransferase family. As to quaternary structure, homodimer. Pyridoxal 5'-phosphate serves as cofactor.

It carries out the reaction D-alanine + 2-oxoglutarate = D-glutamate + pyruvate. Its function is as follows. Acts on the D-isomers of alanine, leucine, aspartate, glutamate, aminobutyrate, norvaline and asparagine. The enzyme transfers an amino group from a substrate D-amino acid to the pyridoxal phosphate cofactor to form pyridoxamine and an alpha-keto acid in the first half-reaction. The second-half reaction is the reverse of the first, transferring the amino group from the pyridoxamine to a second alpha-keto acid to form the product D-amino acid via a ping-pong mechanism. This is an important process in the formation of D-alanine and D-glutamate, which are essential bacterial cell wall components. The chain is D-alanine aminotransferase (dat) from Bacillus sp. (strain YM-1).